The chain runs to 307 residues: UDP-N-acetylenolpyruvoylglucosamine reductase (307 aa).

In terms of domain architecture, FAD-binding PCMH-type spans 33–197; it reads TGGNADFYIT…LEAAFTLAPG (165 aa). R176 is a catalytic residue. Catalysis depends on S226, which acts as the Proton donor. E296 is an active-site residue.

Belongs to the MurB family. Requires FAD as cofactor.

The protein resides in the cytoplasm. It carries out the reaction UDP-N-acetyl-alpha-D-muramate + NADP(+) = UDP-N-acetyl-3-O-(1-carboxyvinyl)-alpha-D-glucosamine + NADPH + H(+). The protein operates within cell wall biogenesis; peptidoglycan biosynthesis. In terms of biological role, cell wall formation. The chain is UDP-N-acetylenolpyruvoylglucosamine reductase from Staphylococcus aureus (strain NCTC 8325 / PS 47).